The sequence spans 445 residues: Probable aminotransferase TAT3 (445 aa).

The protein belongs to the class-I pyridoxal-phosphate-dependent aminotransferase family. Pyridoxal 5'-phosphate serves as cofactor. Expressed in roots, leaves and cauline leaves.

The polypeptide is Probable aminotransferase TAT3 (TAT3) (Arabidopsis thaliana (Mouse-ear cress)).